The sequence spans 497 residues: MTVFLSFAFLAAILTHIGCSNQRRSPENGGRRYNRIQHGQCAYTFILPEHDGNCRESTTDQYNTNALQRDAPHVGPDFSSQKLQHLEHVMENYTQWLQKIENYIVENMKSEMAQIQQNAVQNHTATMLEIGTSLLSQTAEQTRKLTDVETQVLNQTSRLEIQLLENSLSTYKLEKQLLQQTNEILKIHEKNSLLEHKILEMEGKHKEEWDTLKEERENLQVLVTRQTYIIQELEKQLNRATNNNSVLQKQQLELMDTVHNLVNLCTKEVLLKGGKKEEEKPFRDCADVYQAGFNKSGIYTIYINNMPEPKKVFCNMDVNGGGWTVIQHREDGSLDFQRGWKEYKMGFGNPSGEYWLGNEFIFAITSQRQYTLRIELMDCEGNRAYSQYDRFHIGNEKQNYRLYLKCHTGTAGKQSSLILHGADFSTKDADNDNCMCKCALMLTGGWWFDACGPSNLNGMFYTAGQNHGKLNGIKWHYFKGPSYSLRSTTMMIRPLDF.

Positions 1 to 19 (MTVFLSFAFLAAILTHIGC) are cleaved as a signal peptide. 5 N-linked (GlcNAc...) asparagine glycosylation sites follow: N92, N122, N154, N243, and N294. Residues 158-256 (RLEIQLLENS…LQKQQLELMD (99 aa)) adopt a coiled-coil conformation. Residues 276–496 (KEEEKPFRDC…STTMMIRPLD (221 aa)) form the Fibrinogen C-terminal domain. Disulfide bonds link C285–C314 and C438–C451.

In terms of assembly, homooligomer. Interacts with TEK/TIE2. Interacts with SVEP1/polydom. Interacts with THBD; this interaction significantly inhibits the generation of activated PC and TAFIa/CPB2 by the thrombin/thrombomodulin complex.

The protein localises to the secreted. Binds and activates TIE2 receptor by inducing its tyrosine phosphorylation. Implicated in endothelial developmental processes later and distinct from that of VEGF. Appears to play a crucial role in mediating reciprocal interactions between the endothelium and surrounding matrix and mesenchyme. Mediates blood vessel maturation/stability. It may play an important role in the heart early development. This chain is Angiopoietin-1 (ANGPT1), found in Canis lupus familiaris (Dog).